The following is a 255-amino-acid chain: MVLIRVIANLLILQLSYAQKSSELVIGGDECDINEHRFLAFLYAGGYYCGGTLINQEWVLSAAHCDKRIIRIYLGMHTRSVPNDDEEIRYPKEKFICPNKKKNVITHKDIMLIRLNRPVKNSEHIAPLSLPSNPPSVGSVCRIMGWGSITTPDETSPNVPHCANINLFNNTVCREAYNGLPAKTLCAGVLQGGIDTCGGDSGGPLICNGQFQGILSWGGIPCAQPRKPAFYTKVFDYLPWIQSIIAGNKTATCPP.

Residues 1–18 (MVLIRVIANLLILQLSYA) form the signal peptide. A propeptide spanning residues 19-24 (QKSSEL) is cleaved from the precursor. Residues 25–246 (VIGGDECDIN…YLPWIQSIIA (222 aa)) enclose the Peptidase S1 domain. Cystine bridges form between Cys-31–Cys-162, Cys-49–Cys-65, Cys-97–Cys-253, Cys-141–Cys-207, Cys-173–Cys-186, and Cys-197–Cys-222. Catalysis depends on charge relay system residues His-64 and Asp-109. An N-linked (GlcNAc...) asparagine glycan is attached at Asn-169. Catalysis depends on Ser-201, which acts as the Charge relay system. Asn-248 is a glycosylation site (N-linked (GlcNAc...) asparagine).

Belongs to the peptidase S1 family. Snake venom subfamily. Monomer. Expressed by the venom gland.

The protein resides in the secreted. Functionally, snake venom serine protease that may act in the hemostasis system of the prey. This Bothrops jararaca (Jararaca) protein is Snake venom serine protease HS112.